The chain runs to 212 residues: High frequency lysogenization protein HflD homolog (212 aa).

Positions leucine 92–glutamate 128 form a coiled coil.

This sequence belongs to the HflD family.

The protein resides in the cytoplasm. Its subcellular location is the cell inner membrane. In Pectobacterium atrosepticum (strain SCRI 1043 / ATCC BAA-672) (Erwinia carotovora subsp. atroseptica), this protein is High frequency lysogenization protein HflD homolog.